We begin with the raw amino-acid sequence, 36 residues long: Pancreatic polypeptide (36 aa).

A Tyrosine amide modification is found at Tyr-36.

Belongs to the NPY family.

It is found in the secreted. Functionally, hormone secreted by pancreatic cells that acts as a regulator of pancreatic and gastrointestinal functions. The chain is Pancreatic polypeptide (PPY) from Larus argentatus (Herring gull).